A 34-amino-acid chain; its full sequence is Chlorotoxin-like peptide AaCtx (34 aa).

4 cysteine pairs are disulfide-bonded: Cys-2-Cys-19, Cys-5-Cys-27, Cys-16-Cys-32, and Cys-20-Cys-34.

Belongs to the short scorpion toxin superfamily. Chloride channel inhibitor family. In terms of tissue distribution, expressed by the venom gland.

It is found in the secreted. Toxin with unknown function in healthy organisms. On glioma cells, interacts with chloride channels (probably ClC-3/CLCN3) and MMP2 at the surface of glioma cells. This complex is then internalized via caveolae, thus inhibiting the chloride channels necessary for cell shrinkage and tumor propagation. Inhibits migration and invasion of U87 glioma cells expressing CLCN3/ClC-3 voltage-gated chloride channels. This Androctonus australis (Sahara scorpion) protein is Chlorotoxin-like peptide AaCtx.